The following is a 309-amino-acid chain: Aspartate carbamoyltransferase catalytic subunit (309 aa).

Carbamoyl phosphate contacts are provided by Arg57 and Thr58. Residue Lys86 participates in L-aspartate binding. Carbamoyl phosphate is bound by residues Arg107, His135, and Gln138. L-aspartate contacts are provided by Arg168 and Arg228. Leu267 and Pro268 together coordinate carbamoyl phosphate.

This sequence belongs to the aspartate/ornithine carbamoyltransferase superfamily. ATCase family. As to quaternary structure, heterooligomer of catalytic and regulatory chains.

It carries out the reaction carbamoyl phosphate + L-aspartate = N-carbamoyl-L-aspartate + phosphate + H(+). It participates in pyrimidine metabolism; UMP biosynthesis via de novo pathway; (S)-dihydroorotate from bicarbonate: step 2/3. In terms of biological role, catalyzes the condensation of carbamoyl phosphate and aspartate to form carbamoyl aspartate and inorganic phosphate, the committed step in the de novo pyrimidine nucleotide biosynthesis pathway. The chain is Aspartate carbamoyltransferase catalytic subunit from Cenarchaeum symbiosum (strain A).